Here is a 64-residue protein sequence, read N- to C-terminus: Large ribosomal subunit protein bL35 (64 aa).

The protein belongs to the bacterial ribosomal protein bL35 family.

This Vibrio campbellii (strain ATCC BAA-1116) protein is Large ribosomal subunit protein bL35.